The chain runs to 267 residues: Glutamate racemase (267 aa).

Substrate is bound by residues 9–10 (DS) and 41–42 (YG). C72 acts as the Proton donor/acceptor in catalysis. 73-74 (NT) lines the substrate pocket. The Proton donor/acceptor role is filled by C184. 185 to 186 (TH) lines the substrate pocket.

Belongs to the aspartate/glutamate racemases family.

The catalysed reaction is L-glutamate = D-glutamate. The protein operates within cell wall biogenesis; peptidoglycan biosynthesis. Its function is as follows. Provides the (R)-glutamate required for cell wall biosynthesis. In Staphylococcus epidermidis (strain ATCC 12228 / FDA PCI 1200), this protein is Glutamate racemase.